Consider the following 175-residue polypeptide: Gamma-crystallin-1 (175 aa).

Beta/gamma crystallin 'Greek key' domains lie at 2–40 (GKIF…RVEG) and 41–83 (GNWI…RFLP). Residues 84–88 (NYQGQ) are connecting peptide. 2 Beta/gamma crystallin 'Greek key' domains span residues 89–129 (YKMR…NVFD) and 130–172 (GHWM…RRVY).

The protein belongs to the beta/gamma-crystallin family. As to quaternary structure, monomer.

Functionally, crystallins are the dominant structural components of the vertebrate eye lens. The sequence is that of Gamma-crystallin-1 (cryg1) from Xenopus laevis (African clawed frog).